Reading from the N-terminus, the 147-residue chain is SsrA-binding protein (147 aa).

The protein belongs to the SmpB family.

Its subcellular location is the cytoplasm. In terms of biological role, required for rescue of stalled ribosomes mediated by trans-translation. Binds to transfer-messenger RNA (tmRNA), required for stable association of tmRNA with ribosomes. tmRNA and SmpB together mimic tRNA shape, replacing the anticodon stem-loop with SmpB. tmRNA is encoded by the ssrA gene; the 2 termini fold to resemble tRNA(Ala) and it encodes a 'tag peptide', a short internal open reading frame. During trans-translation Ala-aminoacylated tmRNA acts like a tRNA, entering the A-site of stalled ribosomes, displacing the stalled mRNA. The ribosome then switches to translate the ORF on the tmRNA; the nascent peptide is terminated with the 'tag peptide' encoded by the tmRNA and targeted for degradation. The ribosome is freed to recommence translation, which seems to be the essential function of trans-translation. In Mycoplasmopsis fermentans (strain ATCC 19989 / NBRC 14854 / NCTC 10117 / PG18) (Mycoplasma fermentans), this protein is SsrA-binding protein.